A 127-amino-acid polypeptide reads, in one-letter code: MAKQRLQQVADTMQRILGEVIQTELKDPRVGFASVTKVEVSADLQHAKVYISIMGTPEERATTMAALQRARGFLRKRVAEEMRHMRFIPELHLIEDTSIDYSLHINDVIRQIQHERMVNPPRIDDEQ.

This sequence belongs to the RbfA family. In terms of assembly, monomer. Binds 30S ribosomal subunits, but not 50S ribosomal subunits or 70S ribosomes.

The protein localises to the cytoplasm. Functionally, one of several proteins that assist in the late maturation steps of the functional core of the 30S ribosomal subunit. Associates with free 30S ribosomal subunits (but not with 30S subunits that are part of 70S ribosomes or polysomes). Required for efficient processing of 16S rRNA. May interact with the 5'-terminal helix region of 16S rRNA. This chain is Ribosome-binding factor A, found in Chloroflexus aggregans (strain MD-66 / DSM 9485).